The following is a 374-amino-acid chain: Protein RecA (374 aa).

Glycine 77–threonine 84 lines the ATP pocket. The segment at alanine 355–alanine 374 is disordered.

The protein belongs to the RecA family.

It localises to the cytoplasm. Functionally, can catalyze the hydrolysis of ATP in the presence of single-stranded DNA, the ATP-dependent uptake of single-stranded DNA by duplex DNA, and the ATP-dependent hybridization of homologous single-stranded DNAs. It interacts with LexA causing its activation and leading to its autocatalytic cleavage. The chain is Protein RecA from Synechococcus sp. (strain CC9605).